A 90-amino-acid chain; its full sequence is MKLIIFVVFCITIYGSTSGQQEVARRYCGRHLAVTMADLCFGVQFDKRNTQYEGYHWPLLAYSEERIKRQGIADECCLVPCTTNVLSSYC.

Residues 1–19 (MKLIIFVVFCITIYGSTSG) form the signal peptide. 3 disulfide bridges follow: Cys-28–Cys-77, Cys-40–Cys-90, and Cys-76–Cys-81. A propeptide spans 49–67 (NTQYEGYHWPLLAYSEERI) (c peptide like).

It belongs to the insulin family. In terms of assembly, heterodimer of a B chain and an A chain linked by two disulfide bonds.

The protein localises to the secreted. The chain is Bombyxin G-1 (BBXG1) from Bombyx mori (Silk moth).